The sequence spans 650 residues: GATA zinc finger domain-containing protein 11 (650 aa).

Residues 16-79 (LYNNTNTNSN…NSSNSLSSSF (64 aa)) are compositionally biased toward low complexity. Disordered stretches follow at residues 16–96 (LYNN…SGYN), 111–181 (KRSN…TTPL), 221–335 (NNSN…NNNK), and 409–515 (RIFG…NKRK). Residues 116–129 (LDDNMSVPTLQNFT) show a composition bias toward polar residues. Low complexity-rich tracts occupy residues 130–180 (NNNN…PTTP) and 221–260 (NNSN…NNNN). The span at 261-272 (QSIVPQSIHLQS) shows a compositional bias: polar residues. Positions 273-334 (TTPQIQPLSL…NNSYNTNNNN (62 aa)) are enriched in low complexity. The span at 425 to 434 (RPRRFRKSKV) shows a compositional bias: basic residues. Low complexity predominate over residues 442–511 (HNNNNNNINN…GNGNTNSTNN (70 aa)). The GATA-type zinc finger occupies 522 to 547 (CTSCGTTSSPEWRKGPAGNQSLCNAC). Positions 619 to 650 (QQQQQQQQQQQNHHHQQLQQQQQQQQQQQLHH) are disordered.

Transcription factor that regulates morphogenetic cell movement during development. The polypeptide is GATA zinc finger domain-containing protein 11 (gtaK) (Dictyostelium discoideum (Social amoeba)).